The primary structure comprises 173 residues: Crossover junction endodeoxyribonuclease RuvC (173 aa).

Residues Asp8, Glu67, and Asp139 contribute to the active site. Residues Asp8, Glu67, and Asp139 each coordinate Mg(2+).

The protein belongs to the RuvC family. As to quaternary structure, homodimer which binds Holliday junction (HJ) DNA. The HJ becomes 2-fold symmetrical on binding to RuvC with unstacked arms; it has a different conformation from HJ DNA in complex with RuvA. In the full resolvosome a probable DNA-RuvA(4)-RuvB(12)-RuvC(2) complex forms which resolves the HJ. The cofactor is Mg(2+).

The protein localises to the cytoplasm. It carries out the reaction Endonucleolytic cleavage at a junction such as a reciprocal single-stranded crossover between two homologous DNA duplexes (Holliday junction).. Its function is as follows. The RuvA-RuvB-RuvC complex processes Holliday junction (HJ) DNA during genetic recombination and DNA repair. Endonuclease that resolves HJ intermediates. Cleaves cruciform DNA by making single-stranded nicks across the HJ at symmetrical positions within the homologous arms, yielding a 5'-phosphate and a 3'-hydroxyl group; requires a central core of homology in the junction. The consensus cleavage sequence is 5'-(A/T)TT(C/G)-3'. Cleavage occurs on the 3'-side of the TT dinucleotide at the point of strand exchange. HJ branch migration catalyzed by RuvA-RuvB allows RuvC to scan DNA until it finds its consensus sequence, where it cleaves and resolves the cruciform DNA. This chain is Crossover junction endodeoxyribonuclease RuvC, found in Sodalis glossinidius (strain morsitans).